The primary structure comprises 166 residues: Large ribosomal subunit protein uL10 (166 aa).

The protein belongs to the universal ribosomal protein uL10 family. In terms of assembly, part of the ribosomal stalk of the 50S ribosomal subunit. The N-terminus interacts with L11 and the large rRNA to form the base of the stalk. The C-terminus forms an elongated spine to which L12 dimers bind in a sequential fashion forming a multimeric L10(L12)X complex.

Functionally, forms part of the ribosomal stalk, playing a central role in the interaction of the ribosome with GTP-bound translation factors. The sequence is that of Large ribosomal subunit protein uL10 from Bacillus licheniformis (strain ATCC 14580 / DSM 13 / JCM 2505 / CCUG 7422 / NBRC 12200 / NCIMB 9375 / NCTC 10341 / NRRL NRS-1264 / Gibson 46).